The primary structure comprises 475 residues: Pregnancy-specific glycoprotein 22 (475 aa).

Positions 1-35 are cleaved as a signal peptide; the sequence is MEVSSELLSNGWTSWQRVLLTASLLTCWLLPITAG. Ig-like V-type domains are found at residues 44-140, 162-260, and 280-380; these read KLVE…FLQV, PASV…YLQV, and PVPP…QVNV. 3 N-linked (GlcNAc...) asparagine glycosylation sites follow: Asn-103, Asn-110, and Asn-231. Residues 387-471 form the Ig-like C2-type domain; the sequence is PVMRVTDSTV…SKTSLPVRLT (85 aa). Cys-406 and Cys-454 are oxidised to a cystine.

This sequence belongs to the immunoglobulin superfamily. CEA family.

Its subcellular location is the secreted. Functionally, may have an angiogenic function during early placental development. Binds to cell-surface heparan sulfate proteoglycans (HSPGs), and stimulates secretion of the proangiogenic factors VEGFA and TGFB from uterine dendritic cells and natural killer cells. Also induces endothelial tube formation in vitro. This Mus musculus (Mouse) protein is Pregnancy-specific glycoprotein 22.